The primary structure comprises 80 residues: Cell division protein ZapB (80 aa).

A coiled-coil region spans residues 3–80; sequence FEVFEKLEAK…ALLGKMEDVQ (78 aa).

Belongs to the ZapB family. Homodimer. The ends of the coiled-coil dimer bind to each other, forming polymers. Interacts with FtsZ.

It is found in the cytoplasm. Functionally, non-essential, abundant cell division factor that is required for proper Z-ring formation. It is recruited early to the divisome by direct interaction with FtsZ, stimulating Z-ring assembly and thereby promoting cell division earlier in the cell cycle. Its recruitment to the Z-ring requires functional FtsA or ZipA. This chain is Cell division protein ZapB, found in Photorhabdus laumondii subsp. laumondii (strain DSM 15139 / CIP 105565 / TT01) (Photorhabdus luminescens subsp. laumondii).